We begin with the raw amino-acid sequence, 779 residues long: GATOR2 complex protein WDR24 (779 aa).

WD repeat units lie at residues 66 to 106 (SLNF…RNKQ), 112 to 152 (EHKR…SVST), 155 to 195 (GQSE…RYER), 199 to 239 (AHTG…VKEI), 243 to 285 (QTFA…IPFA), and 289 to 332 (EHKD…VDRA). Disordered regions lie at residues 506–526 (LETN…EGQA) and 570–590 (DHPS…VSGS). The segment at 707–729 (NCSNCKRPMSNKGWICDRCHQCA) adopts a C4-type zinc-finger fold. Residues cysteine 708, cysteine 711, cysteine 722, cysteine 725, cysteine 732, cysteine 735, cysteine 746, cysteine 749, histidine 751, histidine 754, histidine 757, cysteine 768, cysteine 772, histidine 774, and cysteine 776 each contribute to the Zn(2+) site. The RING-type; atypical zinc finger occupies 730–779 (SVCAVCHHVVKGLFVWCQGCSHGGHLEHVMEWLKQSKHCPAGCGHLCEYT).

The protein belongs to the WD repeat WDR24 family. In terms of assembly, component of the GATOR2 subcomplex, composed of MIOS, SEC13, SEH1L, WDR24 and WDR59. The GATOR2 complex interacts with CASTOR1 and CASTOR2; the interaction is negatively regulated by arginine. The GATOR2 complex interacts with SESN1, SESN2 and SESN3; the interaction is negatively regulated by amino acids.

It is found in the lysosome membrane. It catalyses the reaction S-ubiquitinyl-[E2 ubiquitin-conjugating enzyme]-L-cysteine + [acceptor protein]-L-lysine = [E2 ubiquitin-conjugating enzyme]-L-cysteine + N(6)-ubiquitinyl-[acceptor protein]-L-lysine.. Its pathway is protein modification; protein ubiquitination. With respect to regulation, the GATOR2 complex is negatively regulated by the upstream amino acid sensors CASTOR1 and SESN2, which sequester the GATOR2 complex in absence of amino acids. In the presence of abundant amino acids, GATOR2 is released from CASTOR1 and SESN2 and activated. In terms of biological role, catalytic component of the GATOR2 complex, a multiprotein complex that acts as an activator of the amino acid-sensing branch of the mTORC1 signaling pathway. The GATOR2 complex indirectly activates mTORC1 through the inhibition of the GATOR1 subcomplex. GATOR2 probably acts as an E3 ubiquitin-protein ligase toward GATOR1. In the presence of abundant amino acids, the GATOR2 complex mediates ubiquitination of the NPRL2 core component of the GATOR1 complex, leading to GATOR1 inactivation. In the absence of amino acids, GATOR2 is inhibited, activating the GATOR1 complex. In addition to its role in regulation of the mTORC1 complex, promotes the acidification of lysosomes and facilitates autophagic flux. Within the GATOR2 complex, WDR24 constitutes the catalytic subunit that mediates 'Lys-6'-linked ubiquitination of NPRL2. In Danio rerio (Zebrafish), this protein is GATOR2 complex protein WDR24.